A 278-amino-acid chain; its full sequence is Sulfur carrier protein FdhD (278 aa).

Residue Cys-121 is the Cysteine persulfide intermediate of the active site. 260 to 265 (FCKPGR) serves as a coordination point for Mo-bis(molybdopterin guanine dinucleotide).

It belongs to the FdhD family.

It localises to the cytoplasm. In terms of biological role, required for formate dehydrogenase (FDH) activity. Acts as a sulfur carrier protein that transfers sulfur from IscS to the molybdenum cofactor prior to its insertion into FDH. This chain is Sulfur carrier protein FdhD, found in Escherichia coli O127:H6 (strain E2348/69 / EPEC).